The chain runs to 37 residues: Omega-conotoxin-like S6.7 (37 aa).

The propeptide occupies 1-4 (KSTS). Cystine bridges form between C5–C20, C12–C23, and C19–C32.

It belongs to the conotoxin O1 superfamily. Expressed by the venom duct.

It localises to the secreted. Omega-conotoxins act at presynaptic membranes, they bind and block voltage-gated calcium channels (Cav). This toxin blocks N-, P- and Q-type calcium channels. This chain is Omega-conotoxin-like S6.7, found in Conus striatus (Striated cone).